The primary structure comprises 406 residues: Protein ALP1-like (406 aa).

Residues Lys-8–Lys-15 carry the Nuclear localization signal motif. Positions Ile-187–Asn-353 constitute a DDE Tnp4 domain. Positions 188, 240, and 279 each coordinate a divalent metal cation.

Belongs to the HARBI1 family. The cofactor is a divalent metal cation.

The protein localises to the nucleus. In terms of biological role, transposase-derived protein that may have nuclease activity. The sequence is that of Protein ALP1-like from Arabidopsis thaliana (Mouse-ear cress).